The following is a 229-amino-acid chain: Aldehyde oxidoreductase iron-sulfur-binding subunit PaoA (229 aa).

Residues 1–21 (MSNQGEYPEDNRVGKHEPHDL) are disordered. The tat-type signal signal peptide spans 1–53 (MSNQGEYPEDNRVGKHEPHDLSLTRRDLIKVSAATAAAAVVYPHSTLAASVPA). Positions 9–21 (EDNRVGKHEPHDL) are enriched in basic and acidic residues. The 77-residue stretch at 61–137 (MPLTLKVNGK…GAEITTIEGL (77 aa)) folds into the 2Fe-2S ferredoxin-type domain. [2Fe-2S] cluster contacts are provided by C99, C104, G105, C107, C119, C158, C161, C208, and C210.

Heterotrimer composed of PaoA, PaoB and PaoC. [2Fe-2S] cluster is required as a cofactor. Post-translationally, exported by the Tat system. The position of the signal peptide cleavage has not been experimentally proven.

It localises to the periplasm. The catalysed reaction is an aldehyde + A + H2O = a carboxylate + AH2 + H(+). Functionally, oxidizes aldehydes to the corresponding carboxylic acids with a preference for aromatic aldehydes. It might play a role in the detoxification of aldehydes to avoid cell damage. This chain is Aldehyde oxidoreductase iron-sulfur-binding subunit PaoA, found in Escherichia coli O157:H7.